Consider the following 229-residue polypeptide: 2-phytyl-1,4-naphtoquinone methyltransferase (229 aa).

The protein belongs to the class I-like SAM-binding methyltransferase superfamily. MenG/UbiE family.

It carries out the reaction demethylphylloquinol + S-adenosyl-L-methionine = phylloquinol + S-adenosyl-L-homocysteine + H(+). The protein operates within cofactor biosynthesis; phylloquinone biosynthesis. Its function is as follows. Methyltransferase required for the conversion of 2-phytyl-1,4-beta-naphthoquinol to phylloquinol. The sequence is that of 2-phytyl-1,4-naphtoquinone methyltransferase from Trichormus variabilis (strain ATCC 29413 / PCC 7937) (Anabaena variabilis).